Reading from the N-terminus, the 114-residue chain is TYRO protein tyrosine kinase-binding protein (114 aa).

A signal peptide spans 1-21 (MGALEPSWCLLFLPVLLTVGG). At 22–42 (LSPVQAQSDTFPRCDCSSVSP) the chain is on the extracellular side. Residues 43–63 (GVLAGIVLGDLVLTLLIALAV) form a helical membrane-spanning segment. Asp-52 is a Ca(2+) binding site. The Cytoplasmic segment spans residues 64–114 (YSLGRLVSRGQGTAEGTRKQHIAETESPYQELQGQRPEVYSDLNTQRQYYR). The tract at residues 74–107 (QGTAEGTRKQHIAETESPYQELQGQRPEVYSDLN) is disordered. The region spanning 81-109 (RKQHIAETESPYQELQGQRPEVYSDLNTQ) is the ITAM domain. Residues Tyr-92 and Tyr-103 each carry the phosphotyrosine modification.

This sequence belongs to the TYROBP family. Homodimer; disulfide-linked. Homotrimer; disulfide-linked. Homotetramer; disulfide-linked. Homotrimers and homotetramers form when low levels of partner receptors are available and are competitive with assembly with interacting receptors. They may represent alternative oligomerization states or may be intermediates in the receptor assembly process. Binding of a metal cation aids in homooligomerization through coordination of the metal ion by the subunits of the oligomer. Interacts with TREM1. Interacts with TREM2. Interacts with TREM3. Interacts with CLECSF5. Interacts with CD300LB and CD300C2. Interacts with CD300E. Interacts (via ITAM domain) with SYK (via SH2 domains); activates SYK mediating neutrophil and macrophage integrin-mediated activation. Interacts (via transmembrane domain) with KLRK1 isoform 2 (via transmembrane domain); the interaction is required for KLRK1 NK cell surface expression and NK cell-mediated cytotoxicity. Interacts with KLRC2. Interacts with CD300H. Interacts with KLRD1. Interacts with KLRA4 and KLRA8. In terms of processing, tyrosine phosphorylated. Following ligand binding by associated receptors, tyrosine phosphorylated in the ITAM domain which leads to activation of additional tyrosine kinases and subsequent cell activation. Expressed on microglia (at protein level). Expressed on oligodendrocytes (at protein level). Expressed on macrophages and osteoclasts. Expressed on dendritic cells in liver, spleen, kidney and lung with highest levels in liver dendritic cells.

Its subcellular location is the cell membrane. Functionally, adapter protein which non-covalently associates with activating receptors found on the surface of a variety of immune cells to mediate signaling and cell activation following ligand binding by the receptors. TYROBP is tyrosine-phosphorylated in the ITAM domain following ligand binding by the associated receptors which leads to activation of additional tyrosine kinases and subsequent cell activation. Also has an inhibitory role in some cells. Non-covalently associates with activating receptors of the CD300 family to mediate cell activation. Also mediates cell activation through association with activating receptors of the CD200R family. Required for neutrophil activation mediated by integrin. Required for the activation of myeloid cells mediated by the CLEC5A/MDL1 receptor. Associates with natural killer (NK) cell receptors such as the KLRD1/KLRC2 heterodimer to mediate NK cell activation. Also associates non-covalently with the NK cell receptors KLRA4/LY49D and KLRA8/LY49H which leads to NK cell activation. Associates with TREM1 to mediate activation of neutrophils and monocytes. Associates with TREM2 on monocyte-derived dendritic cells to mediate up-regulation of chemokine receptor CCR7 and dendritic cell maturation and survival. Association with TREM2 mediates cytokine-induced formation of multinucleated giant cells which are formed by the fusion of macrophages. Stabilizes the TREM2 C-terminal fragment (TREM2-CTF) which is produced by TREM2 ectodomain shedding. In microglia, required with TREM2 for phagocytosis of apoptotic neurons. Required with ITGAM/CD11B in microglia to control production of microglial superoxide ions which promote the neuronal apoptosis that occurs during brain development. Promotes pro-inflammatory responses in microglia following nerve injury which accelerates degeneration of injured neurons. Positively regulates the expression of the IRAK3/IRAK-M kinase and IL10 production by liver dendritic cells and inhibits their T cell allostimulatory ability. Negatively regulates B cell proliferation. Required for CSF1-mediated osteoclast cytoskeletal organization. Positively regulates multinucleation during osteoclast development. The chain is TYRO protein tyrosine kinase-binding protein from Mus musculus (Mouse).